Consider the following 171-residue polypeptide: 3-hydroxydecanoyl-[acyl-carrier-protein] dehydratase (171 aa).

H70 is a catalytic residue.

Belongs to the thioester dehydratase family. FabA subfamily. In terms of assembly, homodimer.

It is found in the cytoplasm. The enzyme catalyses a (3R)-hydroxyacyl-[ACP] = a (2E)-enoyl-[ACP] + H2O. It carries out the reaction (3R)-hydroxydecanoyl-[ACP] = (2E)-decenoyl-[ACP] + H2O. The catalysed reaction is (2E)-decenoyl-[ACP] = (3Z)-decenoyl-[ACP]. It participates in lipid metabolism; fatty acid biosynthesis. Its function is as follows. Necessary for the introduction of cis unsaturation into fatty acids. Catalyzes the dehydration of (3R)-3-hydroxydecanoyl-ACP to E-(2)-decenoyl-ACP and then its isomerization to Z-(3)-decenoyl-ACP. Can catalyze the dehydratase reaction for beta-hydroxyacyl-ACPs with saturated chain lengths up to 16:0, being most active on intermediate chain length. This Pseudomonas aeruginosa (strain LESB58) protein is 3-hydroxydecanoyl-[acyl-carrier-protein] dehydratase.